Consider the following 57-residue polypeptide: Large ribosomal subunit protein uL30 (57 aa).

The protein belongs to the universal ribosomal protein uL30 family. As to quaternary structure, part of the 50S ribosomal subunit.

This Buchnera aphidicola subsp. Cinara cedri (strain Cc) protein is Large ribosomal subunit protein uL30.